The primary structure comprises 518 residues: Protein FAM98A (518 aa).

2 disordered regions span residues 300–415 and 434–518; these read GRVP…GHSS and GSGY…HYTS. Basic and acidic residues predominate over residues 302–311; that stretch reads VPDRGGRPNE. 3 stretches are compositionally biased toward gly residues: residues 349-364, 383-396, and 405-415; these read GGRG…GGRG, WTDG…GYQD, and QPGGYHGGHSS. Over residues 447–459 the composition is skewed to basic and acidic residues; the sequence is RYQDGGHHGDRGG. The span at 460–484 shows a compositional bias: gly residues; sequence GRGGRGGRGGRGGRAGQGGGWGGRG. A compositionally biased stretch (low complexity) spans 488 to 504; that stretch reads YHQGGQFEQHFQHGGYQ. The segment covering 505-518 has biased composition (polar residues); that stretch reads YNHSGFGQGRHYTS.

The protein belongs to the FAM98 family. In terms of assembly, interacts (via N- and C-terminus) with DDX1. Interacts (via N- and C-terminus) with C14orf166. Interacts with FAM98B. Interacts with PLEKHM1 (via N- and C-terminus).

Its function is as follows. Positively stimulates PRMT1-induced protein arginine methylation. Involved in skeletal homeostasis. Positively regulates lysosome peripheral distribution and ruffled border formation in osteoclasts. This is Protein FAM98A from Pongo abelii (Sumatran orangutan).